A 1161-amino-acid chain; its full sequence is DNA-directed RNA polymerase 132 kDa polypeptide (1161 aa).

It belongs to the RNA polymerase beta chain family. As to quaternary structure, the DNA-dependent RNA polymerase used for intermediate and late genes expression consists of eight subunits (147) kDa, (133) kDa, (35) kDa, (30) kDa, (22) kDa, (19) kDa, (18) kDa and (7) kDa totalling more than 500 kDa in mass. The same holoenzyme, with the addition of the transcription-specificity factor RAP94, is used for early gene expression.

It is found in the virion. It carries out the reaction RNA(n) + a ribonucleoside 5'-triphosphate = RNA(n+1) + diphosphate. In terms of biological role, part of the DNA-dependent RNA polymerase which catalyzes the transcription of viral DNA into RNA using the four ribonucleoside triphosphates as substrates. Responsible for the transcription of early, intermediate and late genes. DNA-dependent RNA polymerase associates with the early transcription factor (ETF), itself composed of D6 and A7, thereby allowing the early genes transcription. Late transcription, and probably also intermediate transcription, require newly synthesized RNA polymerase. In Fowlpox virus (strain NVSL) (FPV), this protein is DNA-directed RNA polymerase 132 kDa polypeptide (RPO132).